A 334-amino-acid chain; its full sequence is Siroheme decarboxylase (334 aa).

His93 is a catalytic residue.

It belongs to the Ahb/Nir family.

The enzyme catalyses siroheme + 2 H(+) = 12,18-didecarboxysiroheme + 2 CO2. Its pathway is porphyrin-containing compound metabolism. Involved in heme d1 biosynthesis. Catalyzes the decarboxylation of siroheme into didecarboxysiroheme. Siroheme is probably decarboxylated to monodecarboxysiroheme, which is in turn decarboxylated to didecarboxysiroheme. This chain is Siroheme decarboxylase, found in Hydrogenobacter thermophilus (strain DSM 6534 / IAM 12695 / TK-6).